Consider the following 272-residue polypeptide: Small ribosomal subunit protein uS2 (272 aa).

The tract at residues 244-272 (EDDYEGAEGDLDLDSANEEESLEDNNEEE) is disordered.

The protein belongs to the universal ribosomal protein uS2 family.

This Trichodesmium erythraeum (strain IMS101) protein is Small ribosomal subunit protein uS2.